The sequence spans 259 residues: L-cystine import ATP-binding protein TcyN (259 aa).

The region spanning 2–239 (IEIKNIHKQF…TKKDRTRQFL (238 aa)) is the ABC transporter domain. 34–41 (GPSGSGKT) is an ATP binding site.

The protein belongs to the ABC transporter superfamily. L-cystine importer (TC 3.A.1.3.13) family. The complex is composed of two ATP-binding proteins (TcyN), two transmembrane proteins (TcyL and TcyM) and two solute-binding proteins (TcyJ and TcyK).

The protein localises to the cell membrane. Its function is as follows. Part of the ABC transporter complex TcyJKLMN involved in L-cystine import. Responsible for energy coupling to the transport system. Is also involved in cystathionine, djenkolate, and S-methylcysteine transport. This Bacillus subtilis (strain 168) protein is L-cystine import ATP-binding protein TcyN (tcyN).